A 135-amino-acid chain; its full sequence is uncharacterized protein (135 aa).

It belongs to the MG067/MG068/MG395 family.

This is an uncharacterized protein from Mycoplasma pneumoniae (strain ATCC 29342 / M129 / Subtype 1) (Mycoplasmoides pneumoniae).